The primary structure comprises 664 residues: Tripartite terminase subunit 1 (664 aa).

Residues 205–233 form a C3H1-type zinc finger; the sequence is CHVCFEELCVTANQGATASRRLAGKICDH. Disordered stretches follow at residues 273 to 295 and 440 to 466; these read SKMT…AQER and HAAE…GGPE. Over residues 281–292 the composition is skewed to low complexity; the sequence is GGPAEAPGPAAA.

It belongs to the herpesviridae TRM1 protein family. Associates with TRM2 and TRM3 to form the tripartite terminase complex. Interacts with portal protein.

Its subcellular location is the host nucleus. In terms of biological role, component of the molecular motor that translocates viral genomic DNA in empty capsid during DNA packaging. Forms a tripartite terminase complex together with TRM2 and TRM3 in the host cytoplasm. Once the complex reaches the host nucleus, it interacts with the capsid portal vertex. This portal forms a ring in which genomic DNA is translocated into the capsid. TRM1 carries an endonuclease activity that plays an important role for the cleavage of concatemeric viral DNA into unit length genomes. This is Tripartite terminase subunit 1 from Bos taurus (Bovine).